The primary structure comprises 311 residues: Coproporphyrin III ferrochelatase 1 (311 aa).

Residues Tyr-12, Arg-29, 45–46 (RY), Ser-53, and Tyr-124 each bind Fe-coproporphyrin III. Fe(2+)-binding residues include His-182 and Glu-263.

It belongs to the ferrochelatase family.

It localises to the cytoplasm. The enzyme catalyses Fe-coproporphyrin III + 2 H(+) = coproporphyrin III + Fe(2+). It functions in the pathway porphyrin-containing compound metabolism; protoheme biosynthesis. Its function is as follows. Involved in coproporphyrin-dependent heme b biosynthesis. Catalyzes the insertion of ferrous iron into coproporphyrin III to form Fe-coproporphyrin III. The sequence is that of Coproporphyrin III ferrochelatase 1 from Bacillus thuringiensis subsp. konkukian (strain 97-27).